The chain runs to 854 residues: Iron and copper transporter IacT (854 aa).

Positions 187-194 (IELIVTAQ) match the TonB box motif. Positions 199–315 (DAQDVPLSLT…PAGVVNVISR (117 aa)) constitute a TBDR plug domain. Residues 320–854 (QPEMRISALY…TYGVRVSASF (535 aa)) enclose the TBDR beta-barrel domain. A TonB C-terminal box motif is present at residues 839-854 (GFGDPVTYGVRVSASF).

Belongs to the TonB-dependent receptor family.

Its subcellular location is the cell outer membrane. Involved in the TonB-dependent uptake of copper and iron under conditions in which the concentration of copper exceeds that of the iron. The polypeptide is Iron and copper transporter IacT (Nostoc sp. (strain PCC 7120 / SAG 25.82 / UTEX 2576)).